The chain runs to 473 residues: Photosystem II CP43 reaction center protein (473 aa).

Residues Met-1–Glu-14 constitute a propeptide that is removed on maturation. Thr-15 is modified (N-acetylthreonine). Thr-15 is modified (phosphothreonine). 5 consecutive transmembrane segments (helical) span residues Leu-69–Ala-93, Leu-134–Asn-155, Lys-178–Thr-200, Lys-255–Ser-275, and Trp-291–Ala-312. Residue Glu-367 coordinates [CaMn4O5] cluster. Residues Arg-447–Pro-471 traverse the membrane as a helical segment.

The protein belongs to the PsbB/PsbC family. PsbC subfamily. As to quaternary structure, PSII is composed of 1 copy each of membrane proteins PsbA, PsbB, PsbC, PsbD, PsbE, PsbF, PsbH, PsbI, PsbJ, PsbK, PsbL, PsbM, PsbT, PsbX, PsbY, PsbZ, Psb30/Ycf12, at least 3 peripheral proteins of the oxygen-evolving complex and a large number of cofactors. It forms dimeric complexes. It depends on Binds multiple chlorophylls and provides some of the ligands for the Ca-4Mn-5O cluster of the oxygen-evolving complex. It may also provide a ligand for a Cl- that is required for oxygen evolution. PSII binds additional chlorophylls, carotenoids and specific lipids. as a cofactor.

The protein resides in the plastid. It localises to the chloroplast thylakoid membrane. In terms of biological role, one of the components of the core complex of photosystem II (PSII). It binds chlorophyll and helps catalyze the primary light-induced photochemical processes of PSII. PSII is a light-driven water:plastoquinone oxidoreductase, using light energy to abstract electrons from H(2)O, generating O(2) and a proton gradient subsequently used for ATP formation. This chain is Photosystem II CP43 reaction center protein, found in Buxus microphylla (Littleleaf boxwood).